Consider the following 417-residue polypeptide: Tryptophan synthase beta chain (417 aa).

Lys99 bears the N6-(pyridoxal phosphate)lysine mark.

It belongs to the TrpB family. As to quaternary structure, tetramer of two alpha and two beta chains. It depends on pyridoxal 5'-phosphate as a cofactor.

The enzyme catalyses (1S,2R)-1-C-(indol-3-yl)glycerol 3-phosphate + L-serine = D-glyceraldehyde 3-phosphate + L-tryptophan + H2O. Its pathway is amino-acid biosynthesis; L-tryptophan biosynthesis; L-tryptophan from chorismate: step 5/5. In terms of biological role, the beta subunit is responsible for the synthesis of L-tryptophan from indole and L-serine. The protein is Tryptophan synthase beta chain (trpB) of Corynebacterium glutamicum (strain ATCC 13032 / DSM 20300 / JCM 1318 / BCRC 11384 / CCUG 27702 / LMG 3730 / NBRC 12168 / NCIMB 10025 / NRRL B-2784 / 534).